The following is an 891-amino-acid chain: Putative alpha,alpha-trehalose-phosphate synthase [UDP-forming] 100 kDa subunit (891 aa).

Threonine 88 is subject to Phosphothreonine. The disordered stretch occupies residues 88–126 (TGGSMTPGLGAMSPIPGSGRSSPLYTQPRSRATSPSRVR). A compositionally biased stretch (polar residues) spans 106–124 (GRSSPLYTQPRSRATSPSR). Residues serine 108 and serine 109 each carry the phosphoserine modification. The interval 132–613 (AAPGIGAGAL…VTGFETKLKK (482 aa)) is glycosyltransferase.

This sequence in the N-terminal section; belongs to the glycosyltransferase 20 family.

The catalysed reaction is D-glucose 6-phosphate + UDP-alpha-D-glucose = alpha,alpha-trehalose 6-phosphate + UDP + H(+). This is Putative alpha,alpha-trehalose-phosphate synthase [UDP-forming] 100 kDa subunit from Schizosaccharomyces pombe (strain 972 / ATCC 24843) (Fission yeast).